The following is a 436-amino-acid chain: MLKAIARIVRTPDLLRKIAFTLGLIAVYRMGDFVPATGVDYPAVQQCLAAGNAQGGLYSFVNMFSGGALLQVSVFALGIMPYITASIIVQLLRVVIPRFEQLHQERRRGQATLTQYTRYLTLALALLQATTMASLARTGALLGCSLPLLRDGSILTVLLVVIALTTGCLIVMWFGERITENGVGNGMSLLIFTSIAAGFPAGLGQVVQTQGWRVFAIVMGIGLLTMLAIVFVEESQRRIPVQYAKRQIGSRTVGGSSTYIPVKVNMANVIPVIFASSVLMLPGILIQFNTPQDGSAPAPWITWLSRYFGSGDHPVYMALYFLLIIGFTYFYVSITFNPVEISDNMKRYGGFIPASAPAGPTERYLQYVISRITFVVGALYLGIVAMIPLIAFAVIGTSQNFPLGGTSILIMVGVGLQTVKQVSAQMEQRHYEGLLR.

10 helical membrane passes run 18–38, 69–89, 116–138, 154–174, 187–207, 214–234, 266–286, 314–334, 375–395, and 396–416; these read IAFT…PATG, LLQV…SIIV, YTRY…LART, ILTV…VMWF, MSLL…GQVV, VFAI…FVEE, MANV…GILI, PVYM…YVSI, VVGA…FAVI, and GTSQ…GVGL.

The protein belongs to the SecY/SEC61-alpha family. In terms of assembly, component of the Sec protein translocase complex. Heterotrimer consisting of SecY, SecE and SecG subunits. The heterotrimers can form oligomers, although 1 heterotrimer is thought to be able to translocate proteins. Interacts with the ribosome. Interacts with SecDF, and other proteins may be involved. Interacts with SecA.

The protein localises to the cell membrane. Functionally, the central subunit of the protein translocation channel SecYEG. Consists of two halves formed by TMs 1-5 and 6-10. These two domains form a lateral gate at the front which open onto the bilayer between TMs 2 and 7, and are clamped together by SecE at the back. The channel is closed by both a pore ring composed of hydrophobic SecY resides and a short helix (helix 2A) on the extracellular side of the membrane which forms a plug. The plug probably moves laterally to allow the channel to open. The ring and the pore may move independently. The chain is Protein translocase subunit SecY from Micrococcus luteus (Micrococcus lysodeikticus).